We begin with the raw amino-acid sequence, 463 residues long: Cysteine--tRNA ligase (463 aa).

Cysteine 28 contacts Zn(2+). The 'HIGH' region motif lies at 30–40 (VTIYDLCHIGH). Zn(2+) is bound by residues cysteine 209, histidine 234, and glutamate 238. The 'KMSKS' region motif lies at 266-270 (KMSKS). Lysine 269 serves as a coordination point for ATP.

This sequence belongs to the class-I aminoacyl-tRNA synthetase family. In terms of assembly, monomer. Zn(2+) serves as cofactor.

It localises to the cytoplasm. The enzyme catalyses tRNA(Cys) + L-cysteine + ATP = L-cysteinyl-tRNA(Cys) + AMP + diphosphate. The polypeptide is Cysteine--tRNA ligase (Tolumonas auensis (strain DSM 9187 / NBRC 110442 / TA 4)).